The primary structure comprises 343 residues: Putative ALA-interacting subunit 2 (343 aa).

A helical transmembrane segment spans residues 43-63 (PISVITVFMLMGFVFIPIGLI). Asn-103, Asn-178, Asn-191, and Asn-218 each carry an N-linked (GlcNAc...) asparagine glycan. Residues 301 to 321 (FLGITYLVVGSSSIVISIIFM) traverse the membrane as a helical segment.

It belongs to the CDC50/LEM3 family. In terms of tissue distribution, expressed in roots, leaves, stems, flowers and siliques.

Its subcellular location is the membrane. This is Putative ALA-interacting subunit 2 (ALIS2) from Arabidopsis thaliana (Mouse-ear cress).